We begin with the raw amino-acid sequence, 594 residues long: Putative 3,4-dihydroxy-2-butanone kinase (594 aa).

Residues 11-341 form the DhaK domain; that stretch reads DPNDVVTEFI…LDAPTKAPNW (331 aa). Residues 62-65, lysine 113, and aspartate 118 contribute to the substrate site; that span reads GSGH. Histidine 226 (tele-hemiaminal-histidine intermediate) is an active-site residue. The segment at 339 to 358 is disordered; sequence PNWPVGAEGNRPPAKIPVPL. Residues 381–585 enclose the DhaL domain; sequence HILETAIEAA…AAAWYRAAAL (205 aa). Residues 410–413, 455–456, glycine 499, 507–508, and 570–572 contribute to the ATP site; these read DGDC, TS, TL, and DPG.

Belongs to the dihydroxyacetone kinase (DAK) family.

This is Putative 3,4-dihydroxy-2-butanone kinase (DHBK) from Solanum lycopersicum (Tomato).